Here is a 126-residue protein sequence, read N- to C-terminus: MTAKNAVLQLSIHEERTRKKALVTVSRFSGVTSITMDKSGKMTIVGEVDVPAVVMKLRKLCNTEIVSVDDVKPPVKKPEPEKPAESIAYPVPMNYAYQFNPAYANSYYHQPYGNCRVVDEPNCVIM.

The HMA domain maps to 3–69 (AKNAVLQLSI…LCNTEIVSVD (67 aa)). Position 123 is a cysteine methyl ester (Cys123). Cys123 carries S-farnesyl cysteine lipidation. Residues 124 to 126 (VIM) constitute a propeptide, removed in mature form.

Belongs to the HIPP family.

In terms of biological role, probable heavy-metal-binding protein. The chain is Heavy metal-associated isoprenylated plant protein 14 from Arabidopsis thaliana (Mouse-ear cress).